Here is a 105-residue protein sequence, read N- to C-terminus: Thioredoxin (105 aa).

One can recognise a Thioredoxin domain in the interval 1–105; the sequence is MANNVTDSSF…SLLDWINKSI (105 aa). An intrachain disulfide couples C30 to C33.

Belongs to the thioredoxin family.

Functionally, component of the thioredoxin-thioredoxin reductase system. Participates in various redox reactions through the reversible oxidation of its active center dithiol to a disulfide and catalyzes dithiol-disulfide exchange reactions. The protein is Thioredoxin (trxA) of Rickettsia felis (strain ATCC VR-1525 / URRWXCal2) (Rickettsia azadi).